The primary structure comprises 249 residues: Thioesterase TesA (249 aa).

Catalysis depends on residues serine 92, aspartate 196, and histidine 224.

This sequence belongs to the thioesterase family.

The catalysed reaction is a fatty acyl-CoA + H2O = a fatty acid + CoA + H(+). Involved in the synthesis of both phthiocerol dimycocerosates (PDIMs) and phenolic glycolipids (PGLs), which are structurally related lipids non-covalently bound to the outer cell wall layer of M.tuberculosis and are important virulence factors. This chain is Thioesterase TesA, found in Mycobacterium marinum (strain ATCC BAA-535 / M).